We begin with the raw amino-acid sequence, 197 residues long: Protein GrpE (197 aa).

Basic and acidic residues predominate over residues 1 to 27 (MTKQEKAENQEKPTEETVEETPKKETP). Positions 1-50 (MTKQEKAENQEKPTEETVEETPKKETPFEPVMEADEVEETTEAQAPVEEA) are disordered. Residues 32–41 (MEADEVEETT) show a composition bias toward acidic residues.

It belongs to the GrpE family. In terms of assembly, homodimer.

It localises to the cytoplasm. Participates actively in the response to hyperosmotic and heat shock by preventing the aggregation of stress-denatured proteins, in association with DnaK and GrpE. It is the nucleotide exchange factor for DnaK and may function as a thermosensor. Unfolded proteins bind initially to DnaJ; upon interaction with the DnaJ-bound protein, DnaK hydrolyzes its bound ATP, resulting in the formation of a stable complex. GrpE releases ADP from DnaK; ATP binding to DnaK triggers the release of the substrate protein, thus completing the reaction cycle. Several rounds of ATP-dependent interactions between DnaJ, DnaK and GrpE are required for fully efficient folding. This Latilactobacillus sakei (Lactobacillus sakei) protein is Protein GrpE.